We begin with the raw amino-acid sequence, 317 residues long: Protein CbxX, chromosomal (317 aa).

The tract at residues 1 to 21 (MSAPETTAPLQPPAAPAASLP) is disordered. 85–92 (GNPGTGKT) is an ATP binding site.

The protein belongs to the CbxX/CfxQ family.

Functionally, seems to be necessary for the expression of RuBisCO. In Cupriavidus necator (strain ATCC 17699 / DSM 428 / KCTC 22496 / NCIMB 10442 / H16 / Stanier 337) (Ralstonia eutropha), this protein is Protein CbxX, chromosomal (cbxXC).